Reading from the N-terminus, the 187-residue chain is Elongation factor P (187 aa).

The protein belongs to the elongation factor P family.

The protein localises to the cytoplasm. It participates in protein biosynthesis; polypeptide chain elongation. Involved in peptide bond synthesis. Stimulates efficient translation and peptide-bond synthesis on native or reconstituted 70S ribosomes in vitro. Probably functions indirectly by altering the affinity of the ribosome for aminoacyl-tRNA, thus increasing their reactivity as acceptors for peptidyl transferase. In Mycoplasmopsis agalactiae (strain NCTC 10123 / CIP 59.7 / PG2) (Mycoplasma agalactiae), this protein is Elongation factor P.